Reading from the N-terminus, the 120-residue chain is Large ribosomal subunit protein bL20c (120 aa).

It belongs to the bacterial ribosomal protein bL20 family.

Its subcellular location is the plastid. In terms of biological role, binds directly to 23S ribosomal RNA and is necessary for the in vitro assembly process of the 50S ribosomal subunit. It is not involved in the protein synthesizing functions of that subunit. In Cuscuta gronovii (Common dodder), this protein is Large ribosomal subunit protein bL20c (rpl20).